We begin with the raw amino-acid sequence, 185 residues long: Ribosome-recycling factor (185 aa).

The protein belongs to the RRF family.

It is found in the cytoplasm. In terms of biological role, responsible for the release of ribosomes from messenger RNA at the termination of protein biosynthesis. May increase the efficiency of translation by recycling ribosomes from one round of translation to another. This Wolbachia sp. subsp. Brugia malayi (strain TRS) protein is Ribosome-recycling factor.